Here is a 418-residue protein sequence, read N- to C-terminus: Tyrosine--tRNA ligase 1 (418 aa).

Tyr34 contacts L-tyrosine. Positions 39–48 (PTADSLHIGH) match the 'HIGH' region motif. 2 residues coordinate L-tyrosine: Tyr169 and Gln173. Positions 230 to 234 (KFGKT) match the 'KMSKS' region motif. Lys233 contributes to the ATP binding site. Residues 352–418 (TVLIDLLVES…GKKKYFLIRY (67 aa)) enclose the S4 RNA-binding domain.

Belongs to the class-I aminoacyl-tRNA synthetase family. TyrS type 1 subfamily. As to quaternary structure, homodimer.

It localises to the cytoplasm. It carries out the reaction tRNA(Tyr) + L-tyrosine + ATP = L-tyrosyl-tRNA(Tyr) + AMP + diphosphate + H(+). Functionally, catalyzes the attachment of tyrosine to tRNA(Tyr) in a two-step reaction: tyrosine is first activated by ATP to form Tyr-AMP and then transferred to the acceptor end of tRNA(Tyr). The polypeptide is Tyrosine--tRNA ligase 1 (Bacillus anthracis).